The sequence spans 1499 residues: Autophagy-related protein 2 (1499 aa).

Residues 211-221 (EQSVPSYGSSS) show a composition bias toward polar residues. Residues 211–237 (EQSVPSYGSSSSDKEDDNTSDSEDPLS) form a disordered region. Acidic residues predominate over residues 224–234 (KEDDNTSDSED).

The protein belongs to the ATG2 family.

Its subcellular location is the preautophagosomal structure membrane. It is found in the endoplasmic reticulum membrane. The enzyme catalyses a 1,2-diacyl-sn-glycero-3-phosphocholine(in) = a 1,2-diacyl-sn-glycero-3-phosphocholine(out). It catalyses the reaction a 1,2-diacyl-sn-glycero-3-phospho-L-serine(in) = a 1,2-diacyl-sn-glycero-3-phospho-L-serine(out). The catalysed reaction is a 1,2-diacyl-sn-glycero-3-phosphoethanolamine(in) = a 1,2-diacyl-sn-glycero-3-phosphoethanolamine(out). Its function is as follows. Lipid transfer protein required for autophagosome completion and peroxisome degradation. Tethers the edge of the isolation membrane (IM) to the endoplasmic reticulum (ER) and mediates direct lipid transfer from ER to IM for IM expansion. ATG2 binds to the ER exit site (ERES), which is the membrane source for autophagosome formation, using basic residues in its N-terminal region (NR) and to the expanding edge of the IM through its C-terminal region. The latter binding is assisted by an ATG18-PtdIns3P interaction. ATG2 then extracts phospholipids from the membrane source using its NR and transfers them to ATG9 to the IM through its predicted beta-sheet-rich structure for membrane expansion. The sequence is that of Autophagy-related protein 2 from Kluyveromyces marxianus (strain DMKU3-1042 / BCC 29191 / NBRC 104275) (Yeast).